The sequence spans 451 residues: MFKTLYSRIAIYAITVILFSALMSFLFTNIYYHFHLKASNDAKIMRTLKEAREYERTQKPKPLDTYLKHLGQMNYQIMTVNEHGTKHFYGETFRKNTISQSAIKKVLNGEDYHGIKNKPYAFFVTGFFDNETDNTVGIQFKTDDGALAVFMRPDIGKTFSEFRIFLAVLITLLLIISISLVIASTYSIIKPVTALKNATTRIMKGDFSTPIKQTRHDEIGTLQSRFNTMRQNLGQVDQMRQHFVQNVSHEIKTPLTHLQRLLTQLELTQNEEEKQLCINEMFEITNQVSELTKELLLLSELDNASHLTFNDNVHLNTLIKDIIRHEQFRTDEKDLVLFTELEDLYFRGNERLLHQAFNNLIINAMKYAPQNSMINITLTSTNHLIIFNIENDGSIAEEDAKHIFDRFYKLSDESSSNGLGLAITQSIIHLHHGSITLTSDDKTQFIVKLFI.

The next 2 helical transmembrane spans lie at 9–29 and 164–184; these read IAIYAITVILFSALMSFLFTN and IFLAVLITLLLIISISLVIAS. The HAMP domain occupies 186-238; the sequence is YSIIKPVTALKNATTRIMKGDFSTPIKQTRHDEIGTLQSRFNTMRQNLGQVDQ. Residues 246–451 form the Histidine kinase domain; the sequence is NVSHEIKTPL…KTQFIVKLFI (206 aa). H249 bears the Phosphohistidine; by autocatalysis mark.

Post-translationally, autophosphorylated.

The protein localises to the cell membrane. It catalyses the reaction ATP + protein L-histidine = ADP + protein N-phospho-L-histidine.. In terms of biological role, member of the two-component regulatory system HssS/HssR involved in intracellular heme homeostasis and tempering of staphylococcal virulence. HssS functions as a heme sensor histidine kinase which is autophosphorylated at a histidine residue and transfers its phosphate group to an aspartate residue of HssR. HssR/HssS activates the expression of HrtAB, an efflux pump, in response to extracellular heme, hemin, hemoglobin or blood. The polypeptide is Heme sensor protein HssS (hssS) (Staphylococcus epidermidis (strain ATCC 12228 / FDA PCI 1200)).